Consider the following 2617-residue polypeptide: Ubiquitin carboxyl-terminal hydrolase 24 (2617 aa).

Residues 3–44 form the UBA domain; sequence SEEEQHMTTLLCMGFSDPATIRKALRLAKNDINEAVALLTNE. The tract at residues 45–99 is disordered; that stretch reads RPGLDYGGYEPMDSGGPSPGPGGGPRGDSGSDGSGPSRGGSTGGGGGFDPPPAYH. 2 positions are modified to phosphoserine: S62 and S85. The span at 65–92 shows a compositional bias: gly residues; sequence PGGGPRGDSGSDGSGPSRGGSTGGGGGF. Y939 bears the Phosphotyrosine mark. 2 disordered regions span residues 1030–1056 and 1127–1148; these read KTSG…SGAF and LLSE…QQHQ. 2 stretches are compositionally biased toward low complexity: residues 1031–1056 and 1128–1148; these read TSGS…SGAF and LSET…QQHQ. Phosphoserine occurs at positions 1138 and 1282. Positions 1686 to 2039 constitute a USP domain; that stretch reads VGLRNGGATC…NAYMLFYQRV (354 aa). The active-site Nucleophile is C1695. A disordered region spans residues 1920–1942; that stretch reads QDSSSEVGENGRNMDQGGGGSPR. Position 1940 is a phosphoserine (S1940). H1967 serves as the catalytic Proton acceptor. 3 positions are modified to phosphoserine: S2044, S2074, and S2558. Residues 2060-2087 are disordered; sequence AEDLSLSAPSSPEISPQSSPRPHRPNND. A compositionally biased stretch (low complexity) spans 2066–2079; the sequence is SAPSSPEISPQSSP. At T2562 the chain carries Phosphothreonine. The segment at 2572–2617 is disordered; it reads EKEQSGSSNGSESSPANENGERHLQQGSESPMMIGELRSDLDDVDP. The segment covering 2576–2589 has biased composition (low complexity); the sequence is SGSSNGSESSPANE. S2601 is subject to Phosphoserine. Positions 2608 to 2617 are enriched in basic and acidic residues; the sequence is LRSDLDDVDP.

Belongs to the peptidase C19 family.

It carries out the reaction Thiol-dependent hydrolysis of ester, thioester, amide, peptide and isopeptide bonds formed by the C-terminal Gly of ubiquitin (a 76-residue protein attached to proteins as an intracellular targeting signal).. Its function is as follows. Protease that can remove conjugated ubiquitin from target proteins and polyubiquitin chains. Deubiquitinates DDB2, preventing its proteasomal degradation. This Mus musculus (Mouse) protein is Ubiquitin carboxyl-terminal hydrolase 24 (Usp24).